A 411-amino-acid chain; its full sequence is uncharacterized protein (411 aa).

Belongs to the peptidase M20 family.

This is an uncharacterized protein from Haemophilus influenzae (strain ATCC 51907 / DSM 11121 / KW20 / Rd).